The sequence spans 606 residues: Peptide-N(4)-(N-acetyl-beta-glucosaminyl)asparagine amidase (606 aa).

The Thioredoxin domain occupies 2-108; that stretch reads PVTEVGSLPE…IAEKIRQHYS (107 aa). Residues C191, C194, C225, and C228 each contribute to the Zn(2+) site. The Nucleophile role is filled by C251. Catalysis depends on residues H278 and D295. Positions 404-606 constitute a PAW domain; sequence DLGGRITGSE…SFSVKIWMKN (203 aa).

The protein belongs to the transglutaminase-like superfamily. PNGase family. Requires Zn(2+) as cofactor.

It localises to the cytoplasm. The protein resides in the endoplasmic reticulum. It carries out the reaction Hydrolysis of an N(4)-(acetyl-beta-D-glucosaminyl)asparagine residue in which the glucosamine residue may be further glycosylated, to yield a (substituted) N-acetyl-beta-D-glucosaminylamine and a peptide containing an aspartate residue.. Its activity is regulated as follows. Inhibited by Zn(2+) and z-VAD-fmk (caspase inhibitor) but unaffected by EDTA. Functionally, specifically deglycosylates the denatured form of N-linked glycoproteins in the cytoplasm and assists their proteasome-mediated degradation. Cleaves the beta-aspartyl-glucosamine (GlcNAc) of the glycan and the amide side chain of Asn, converting Asn to Asp. Prefers proteins containing high-mannose over those bearing complex type oligosaccharides. Can recognize misfolded proteins in the endoplasmic reticulum that are exported to the cytosol to be destroyed and deglycosylate them, while it has no activity toward native proteins. Deglycosylation is a prerequisite for subsequent proteasome-mediated degradation of some, but not all, misfolded glycoproteins. Also displays oxidoreductase (thioredoxin) activity. Involved in regulating the expression of proteasomal subunits such as rpt-3 in order to confer resistance to proteasomal dysfunction. The chain is Peptide-N(4)-(N-acetyl-beta-glucosaminyl)asparagine amidase (png-1) from Caenorhabditis elegans.